The primary structure comprises 413 residues: Putative competence-damage inducible protein (413 aa).

The protein belongs to the CinA family.

The chain is Putative competence-damage inducible protein from Lacticaseibacillus paracasei (strain ATCC 334 / BCRC 17002 / CCUG 31169 / CIP 107868 / KCTC 3260 / NRRL B-441) (Lactobacillus paracasei).